Reading from the N-terminus, the 278-residue chain is Ethanolamine utilization protein EutJ (278 aa).

This sequence belongs to the EutJ family.

The protein operates within amine and polyamine degradation; ethanolamine degradation. In terms of biological role, may protect ethanolamine ammonia-lyase (EAL, eutB-eutC) from inhibition, may function in assembling the bacterial microcompartment and/or in refolding EAL, suggesting it may have chaperone activity. This Escherichia coli (strain K12) protein is Ethanolamine utilization protein EutJ (eutJ).